The chain runs to 332 residues: Glycerol-3-phosphate dehydrogenase [NAD(P)+] (332 aa).

NADPH contacts are provided by Ser11, Trp12, Arg32, Arg33, and Lys106. Lys106 and Gly136 together coordinate sn-glycerol 3-phosphate. Ala140 contributes to the NADPH binding site. Lys191, Asp244, Ser254, Arg255, and Asn256 together coordinate sn-glycerol 3-phosphate. The active-site Proton acceptor is the Lys191. Arg255 is a binding site for NADPH. NADPH-binding residues include Val280 and Glu282.

This sequence belongs to the NAD-dependent glycerol-3-phosphate dehydrogenase family.

Its subcellular location is the cytoplasm. It catalyses the reaction sn-glycerol 3-phosphate + NAD(+) = dihydroxyacetone phosphate + NADH + H(+). The enzyme catalyses sn-glycerol 3-phosphate + NADP(+) = dihydroxyacetone phosphate + NADPH + H(+). It participates in membrane lipid metabolism; glycerophospholipid metabolism. Functionally, catalyzes the reduction of the glycolytic intermediate dihydroxyacetone phosphate (DHAP) to sn-glycerol 3-phosphate (G3P), the key precursor for phospholipid synthesis. This Corynebacterium aurimucosum (strain ATCC 700975 / DSM 44827 / CIP 107346 / CN-1) (Corynebacterium nigricans) protein is Glycerol-3-phosphate dehydrogenase [NAD(P)+].